We begin with the raw amino-acid sequence, 186 residues long: Membrane protein Rv1476 (186 aa).

The helical transmembrane segment at 138-158 (FPWSALTIVLLIGVLAAAVGA) threads the bilayer. Residues 166 to 186 (RRSATSTDAAPGAGDDLNQGV) are disordered.

The protein localises to the membrane. In terms of biological role, may affect the expression of genes linked to host macrophage apoptosis and immune response, thereby promoting the survival of M.tuberculosis in host macrophages. Overexpression of the gene increases susceptibility of the bacteria to various stresses, but promotes intracellular survival in host macrophages. It has no impact on the growth rate in vitro. Overexpression causes changes in the transcriptome of THP-1 cells, including expression of genes involved in cell proliferation, fatty acid degradation, cytokine-cytokine receptor interaction and immune response pathways. This Mycobacterium tuberculosis (strain ATCC 25618 / H37Rv) protein is Membrane protein Rv1476.